A 528-amino-acid chain; its full sequence is uncharacterized protein (528 aa).

Composition is skewed to basic residues over residues 1–16 and 25–43; these read MGKA…KNHL and QLAR…SHTK. The interval 1–59 is disordered; sequence MGKASKATKKFTKNHLKNTIERRKQLARSKKVYGTKNRNSHTKNKLESGTNDNNKNKED.

It belongs to the NOC2 family.

It localises to the nucleus. It is found in the nucleolus. This is an uncharacterized protein from Schizosaccharomyces pombe (strain 972 / ATCC 24843) (Fission yeast).